Reading from the N-terminus, the 283-residue chain is MMELYIGSHLSTAGGWNALLERSHEEGGTAFAFFPRSPYGKRSKALDPAGAAAFGARLKAEGYGPLVVHAPYVYNLAGKDEAKRAFAIEALAEDIELLTAIRAAGQEVYINIHPGAHVGQGAETGCRLISEGLNQVFERADGVMVLLETMAGKGTECGRNFDELATIMDGVENKANVGVTFDTCHVLDAGYDLENDYDGVMRQLDEAIGLARVKAIHVNDSQFGLGSHKDRHANIGEGQLGIPFFTRLVNDPTMAKLPMILETKEQTPTTHRDEIALLRGLVD.

Zn(2+) is bound by residues histidine 69, histidine 113, glutamate 148, aspartate 182, histidine 185, histidine 217, aspartate 230, histidine 232, and glutamate 262.

This sequence belongs to the AP endonuclease 2 family. The cofactor is Zn(2+).

The catalysed reaction is Endonucleolytic cleavage to 5'-phosphooligonucleotide end-products.. Functionally, endonuclease IV plays a role in DNA repair. It cleaves phosphodiester bonds at apurinic or apyrimidinic (AP) sites, generating a 3'-hydroxyl group and a 5'-terminal sugar phosphate. The protein is Probable endonuclease 4 of Bifidobacterium longum (strain NCC 2705).